A 997-amino-acid polypeptide reads, in one-letter code: Protein translocase subunit SecA (997 aa).

ATP-binding positions include Q84, 102-106 (GEGKT), and D582. Residues 950–997 (PYVPVPEAKPEPSEVFGVERKRATPPPQPGLSRAERRRLMRQEKKRKK) are disordered. The span at 957–971 (AKPEPSEVFGVERKR) shows a compositional bias: basic and acidic residues. Over residues 984-997 (ERRRLMRQEKKRKK) the composition is skewed to basic residues.

It belongs to the SecA family. As to quaternary structure, monomer and homodimer. Part of the essential Sec protein translocation apparatus which comprises SecA, SecYEG and auxiliary proteins SecDF. Other proteins may also be involved.

Its subcellular location is the cell inner membrane. The protein resides in the cytoplasm. It carries out the reaction ATP + H2O + cellular proteinSide 1 = ADP + phosphate + cellular proteinSide 2.. Part of the Sec protein translocase complex. Interacts with the SecYEG preprotein conducting channel. Has a central role in coupling the hydrolysis of ATP to the transfer of proteins into and across the cell membrane, serving as an ATP-driven molecular motor driving the stepwise translocation of polypeptide chains across the membrane. This is Protein translocase subunit SecA from Thermus thermophilus (strain ATCC BAA-163 / DSM 7039 / HB27).